We begin with the raw amino-acid sequence, 504 residues long: Putative F-box/FBD/LRR-repeat protein At3g59240 (504 aa).

Residues 7–60 (KDIISDLPEALICHLLSFVPTKEAALTSLLSEKWRYLFAFAPILDFDDSVWMQS) enclose the F-box domain. 7 LRR repeats span residues 69–95 (HRKF…SLNC), 145–171 (RIRT…DLSS), 173–198 (WFRD…TMSD), 286–312 (TNLF…TFCC), 329–354 (DKDV…VFKG), 369–396 (CLCK…KFGE), and 403–428 (DEEK…ILHY). The 46-residue stretch at 382 to 427 (SSSPVKVLKILKFGEVASYFGDEEKQLELVKYFLETMPNLEQMILH) folds into the FBD domain.

The sequence is that of Putative F-box/FBD/LRR-repeat protein At3g59240 from Arabidopsis thaliana (Mouse-ear cress).